The following is a 552-amino-acid chain: Putative transport protein APL_0966 (552 aa).

5 helical membrane passes run 4–24 (IAII…IGHI), 29–49 (VGLG…CTHL), 65–85 (FGLI…FFAS), 95–115 (GFAV…HKLF), and 161–181 (IAYP…RIIF). RCK C-terminal domains lie at 190–275 (QEFD…ILGE) and 277–360 (ADVS…IIGD). 6 helical membrane passes run 370-390 (MLPI…PLYI), 402-424 (AGGP…LYWF), 438-458 (IVLF…DTLL), 463-483 (LAWM…TGFV), 492-512 (YLSL…LAFA), and 529-549 (VYPL…ILLW).

Belongs to the AAE transporter (TC 2.A.81) family. YidE subfamily.

It localises to the cell membrane. In Actinobacillus pleuropneumoniae serotype 5b (strain L20), this protein is Putative transport protein APL_0966.